Consider the following 574-residue polypeptide: K(+)/H(+) antiporter NhaP2 (574 aa).

A run of 13 helical transmembrane segments spans residues 6–26 (INSFFLIGALLAAVSVLLSPV), 34–54 (ILLIFLAVGILAGEDGPGGIL), 58–78 (YSTAYLVSNLALAIILLDGGM), 87–107 (VALWPALSLATFGVAITTSIT), 109–129 (VMAAWLFDLHWLQGLLVGAIV), 173–193 (IAILGNVDAELSASFMLISFI), 196–216 (FGLGIFLGLGGGWLLWKLVNL), 219–239 (LAEGLYSILVLSGGLMIYAAS), 242–262 (LGGSGILSIYLVGLFLGNKPT), 271–291 (VLDGMTWVSQIGMFLVLGLLL), 299–319 (IWLPGLALAFGMILFARPLAV), 335–355 (WFISWVGLRGAVPIILAVFPM), and 359–379 (LPGAQLYFNLAFFVVLVSLLV). An RCK C-terminal domain is found at 405-486 (SGVEIYPSSE…LEALSNLFSQ (82 aa)).

Belongs to the monovalent cation:proton antiporter 1 (CPA1) transporter (TC 2.A.36) family. NhaP2 subfamily.

It is found in the cell inner membrane. It catalyses the reaction K(+)(in) + H(+)(out) = K(+)(out) + H(+)(in). Functionally, k(+)/H(+) antiporter that extrudes potassium in exchange for external protons and maintains the internal concentration of potassium under toxic levels. This Shewanella sp. (strain MR-7) protein is K(+)/H(+) antiporter NhaP2.